The chain runs to 2237 residues: Zinc finger protein 318 (2237 aa).

Composition is skewed to low complexity over residues 1–12 (MYRSGSRSSVSS) and 30–39 (GASSGPTRRP). Residues 1-221 (MYRSGSRSSV…DMDRDDLTDD (221 aa)) are disordered. An interaction with AR region spans residues 1 to 1114 (MYRSGSRSSV…THMHNKKHTQ (1114 aa)). Ser-40 carries the phosphoserine modification. The segment covering 53–66 (PARRHRSPSGHRGR) has biased composition (basic residues). Phosphoserine is present on residues Ser-69, Ser-109, and Ser-111. Residues 140–156 (IRGESRADFARDGRGDH) are compositionally biased toward basic and acidic residues. A phosphoserine mark is found at Ser-167 and Ser-205. Tyr-237 carries the phosphotyrosine modification. Ser-239 and Ser-246 each carry phosphoserine. The tract at residues 263-350 (LHRPEFSPQS…SPRFLDPEFR (88 aa)) is disordered. 2 stretches are compositionally biased toward basic and acidic residues: residues 274–290 (CHDELLRGTERNRDKLK) and 297–317 (RSEERSREAKRPRYDDTEKVH). Over residues 321–332 (GDHSSFTSGTRN) the composition is skewed to polar residues. The stretch at 348-376 (EFRELDLARRKREEEEEQSRSLSQELVGV) forms a coiled coil. Phosphoserine is present on residues Ser-497, Ser-502, Ser-531, and Ser-557. 2 disordered regions span residues 551 to 612 (QEKR…ESLE) and 645 to 732 (QERL…TKNS). Over residues 560-576 (DIEDEEKFLYGDEEEDI) the composition is skewed to acidic residues. Glycyl lysine isopeptide (Lys-Gly) (interchain with G-Cter in SUMO2) cross-links involve residues Lys-577, Lys-583, Lys-596, and Lys-607. The span at 577–586 (KSESPLKSLE) shows a compositional bias: basic and acidic residues. The span at 592 to 602 (GTRQKANSLPS) shows a compositional bias: polar residues. Basic and acidic residues-rich tracts occupy residues 658 to 677 (SADRRLSADRHLSGDRHFSA) and 692 to 706 (RSSDPHRPESRETHH). The residue at position 865 (Thr-865) is a Phosphothreonine. A coiled-coil region spans residues 904–1003 (EKNRASQKQK…SELDKVAQIL (100 aa)). Basic and acidic residues-rich tracts occupy residues 945–964 (QQGEMLRKKRREKDGHKDPL), 1013–1037 (KSSNDSKESTEKPEKEKSKSPEKEL), and 1047–1056 (KESKMNEKSC). 2 disordered regions span residues 945–966 (QQGEMLRKKRREKDGHKDPLLM) and 1013–1072 (KSSN…TVKQ). Position 1032 is a phosphoserine (Ser-1032). The span at 1058–1072 (KSPSSTESLQPTVKQ) shows a compositional bias: polar residues. Residue Ser-1059 is modified to Phosphoserine. 2 consecutive Matrin-type zinc fingers follow at residues 1085–1119 (AGSHWCKDCNTTCGTMFDFFTHMHNKKHTQTLDPY) and 1158–1180 (FYCQLCEEFLGDPISGEQHVKGH). 3 disordered regions span residues 1245 to 1289 (VKED…KKEP), 1302 to 1342 (SWKK…VGKA), and 1366 to 1395 (TTSTQTKIRPNLPIPSTVLRKSGSATVSKP). Basic and acidic residues-rich tracts occupy residues 1280–1289 (QVKEEVKKEP), 1304–1313 (KKPEKEEEKG), and 1321–1341 (PKEDTVETSKDRDDGKAEVGK). Ser-1445 carries the phosphoserine modification. Disordered stretches follow at residues 1449–1497 (KVEL…LSAP), 1614–1651 (HETKLSSSTLANGESSSLPRTESSDFSSTCTLNSSMSS), 1727–1770 (TSGS…HCQT), and 1790–1867 (EVYQ…MTGH). Over residues 1469-1490 (LPPPPPPPPPPPPPPPPPPPQA) the composition is skewed to pro residues. Over residues 1618 to 1639 (LSSSTLANGESSSLPRTESSDF) the composition is skewed to polar residues. Positions 1640 to 1651 (SSTCTLNSSMSS) are enriched in low complexity. Residues 1734 to 1749 (DTHKDRPPEGKIRFDL) show a composition bias toward basic and acidic residues. Positions 1757–1770 (TDSTSHLSDTHCQT) are enriched in polar residues. Positions 1796–1814 (GCRESEMKRKTELKGKVAT) are enriched in basic and acidic residues. Residues 1798-1827 (RESEMKRKTELKGKVATEEEEEEEEEGANS) adopt a coiled-coil conformation. A compositionally biased stretch (acidic residues) spans 1815–1824 (EEEEEEEEEG). Residues 1828 to 1840 (IEDSNSNHGNRNT) show a composition bias toward polar residues. A phosphoserine mark is found at Ser-1878, Ser-1908, Ser-1988, Ser-2044, Ser-2054, Ser-2140, Ser-2143, Ser-2194, and Ser-2206. Residues 2039–2064 (EGAHSSSNSRNGRITSNSLETGHPVE) are disordered. Residues 2041–2058 (AHSSSNSRNGRITSNSLE) are compositionally biased toward polar residues. The segment at 2178-2237 (EDNDSALNLVKTPPSGSPSRDQVVGGNVSPREMPEQEAAVDVIPDHTRSNVYNSQDYLNG) is disordered. A compositionally biased stretch (polar residues) spans 2226 to 2237 (SNVYNSQDYLNG).

Homodimer. Heterodimer of isoform 1 and isoform 2. Isoform 1 and isoform 2 interact with AR. As to expression, isoform 1 and isoform 2 are highly expressed in testis, moderately expressed in adrenal gland and uterus and faintly expressed in brain, kidney and liver. Isoform 1 is expressed more in adrenal gland, uterus and liver than isoform 2 is. Expression during testicular development of isoform 1 and isoform 2 is restricted to spermatocytes at the pachytene stage of meiotic prophase and to round and elongated spermatids.

The protein localises to the nucleus. Acts as a transcriptional corepressor for AR-mediated transactivation function. May act as a transcriptional regulator during spermatogenesis and in particular, during meiotic division. Functionally, acts as a transcriptional coactivator for AR-mediated transactivation function. May act as a transcriptional regulator during spermatogenesis and in particular, during meiotic division. The polypeptide is Zinc finger protein 318 (Znf318) (Mus musculus (Mouse)).